We begin with the raw amino-acid sequence, 218 residues long: Adenylate kinase (218 aa).

Residue 10–15 (GAGKGT) participates in ATP binding. An NMP region spans residues 30 to 59 (STGDMLRAAIAKGTPLGLSAQKIMESGGLV). Residues threonine 31, arginine 36, 57 to 59 (GLV), 85 to 88 (GFPR), and glutamine 92 each bind AMP. An LID region spans residues 122 to 159 (GRRIHQPSGRVYHVVNQPPKNPGVDDITGEPLIQRDDD). Residues arginine 123 and 132 to 133 (VY) each bind ATP. Residues arginine 156 and arginine 167 each contribute to the AMP site. Glycine 203 lines the ATP pocket.

It belongs to the adenylate kinase family. In terms of assembly, monomer.

Its subcellular location is the cytoplasm. It catalyses the reaction AMP + ATP = 2 ADP. It functions in the pathway purine metabolism; AMP biosynthesis via salvage pathway; AMP from ADP: step 1/1. Functionally, catalyzes the reversible transfer of the terminal phosphate group between ATP and AMP. Plays an important role in cellular energy homeostasis and in adenine nucleotide metabolism. This is Adenylate kinase from Legionella pneumophila (strain Lens).